A 409-amino-acid polypeptide reads, in one-letter code: MSQQYFVIDNGSYNIKAGFSNQDAPIKHQNALSKARDGLIYVGNEYLVQTNNYSGMIFKRPYDHGHLISWETEKAVWDYTFNKASPNQELDASITHLTLTETPFQLPQLSMNTDQIVFEEYGFNEYYRCAPASLVPWSNLGSSESKNNDFTLVVDSGYSGTWIVPIIYQNVYWKGVKKLPIGGAALNGLLREIISFRHYDIADEPVLINTIKEKTCFMATDFEKSLANRKKYRCEFILPDFKTTTTGFVKTKDTPIDTTGDVQSLALIDERFTIPESFYHPEIIFDNTTSSTSTIQNASFKNITDLVVECIMSCPKVTQPLLSGNIITVGGNTNLPGFTDRLRHELVKELPIDWHVQVKETEHNPDEASWFGGAQLTNDEIINNISISKKDYFEHGSNWCQKQFGFKNL.

This sequence belongs to the actin family. ARP6 subfamily. As to quaternary structure, component of the SWR1 chromatin remodeling complex.

The protein resides in the cytoplasm. The protein localises to the cytoskeleton. It localises to the nucleus. Functionally, component of the SWR1 complex which mediates the ATP-dependent exchange of histone H2A for the H2A variant HZT1 leading to transcriptional regulation of selected genes by chromatin remodeling. Involved in chromosome stability. In Debaryomyces hansenii (strain ATCC 36239 / CBS 767 / BCRC 21394 / JCM 1990 / NBRC 0083 / IGC 2968) (Yeast), this protein is Actin-like protein ARP6 (ARP6).